Consider the following 80-residue polypeptide: Probable Rubredoxin-1 (80 aa).

Residues 19-72 enclose the Rubredoxin-like domain; that stretch reads YRKYKCKVCGWVYDPLKGDPSQNIPPKTPFEELPDTWICPVCRGKVGKESFEPL. Fe cation-binding residues include Cys-24, Cys-27, Cys-57, and Cys-60.

It belongs to the rubredoxin family. The cofactor is Fe(3+).

Its function is as follows. Rubredoxin is a small nonheme, iron protein lacking acid-labile sulfide. Its single Fe, chelated to 4 Cys, functions as an electron acceptor and may also stabilize the conformation of the molecule. The sequence is that of Probable Rubredoxin-1 from Methanocaldococcus jannaschii (strain ATCC 43067 / DSM 2661 / JAL-1 / JCM 10045 / NBRC 100440) (Methanococcus jannaschii).